The following is a 64-amino-acid chain: MPKMKSHRGACKRFKATGSGKVKRERMNGSHNLEHKNRKRTRRLHQSTLVDSTKEKQIKRMILA.

Positions threonine 17 to threonine 41 are disordered. Residues glutamate 25–histidine 35 show a composition bias toward basic and acidic residues.

Belongs to the bacterial ribosomal protein bL35 family.

The protein is Large ribosomal subunit protein bL35 of Chlorobaculum parvum (strain DSM 263 / NCIMB 8327) (Chlorobium vibrioforme subsp. thiosulfatophilum).